The following is a 484-amino-acid chain: Adenylosuccinate synthetase, chloroplastic (484 aa).

The N-terminal 44 residues, 1-44 (MSLSTLSHPAAAAAGSGKSLFPAGPAAQSVHFPKARLPVPAAVS), are a transit peptide targeting the chloroplast. Residues 71-77 (GDEGKGK) and 99-101 (GHT) contribute to the GTP site. Aspartate 72 serves as the catalytic Proton acceptor. Mg(2+)-binding residues include aspartate 72 and glycine 99. Residues 72–75 (DEGK), 97–100 (NAGH), threonine 189, arginine 203, glutamine 283, threonine 298, and arginine 362 contribute to the IMP site. Residue histidine 100 is the Proton donor of the active site. 358–364 (TTTGRPR) contributes to the substrate binding site. Residues arginine 364, 390–392 (KLD), and 473–475 (GVG) contribute to the GTP site.

It belongs to the adenylosuccinate synthetase family. In terms of assembly, homodimer. Requires Mg(2+) as cofactor.

Its subcellular location is the plastid. The protein localises to the chloroplast. It catalyses the reaction IMP + L-aspartate + GTP = N(6)-(1,2-dicarboxyethyl)-AMP + GDP + phosphate + 2 H(+). It participates in purine metabolism; AMP biosynthesis via de novo pathway; AMP from IMP: step 1/2. In terms of biological role, plays an important role in the de novo pathway and in the salvage pathway of purine nucleotide biosynthesis. Catalyzes the first committed step in the biosynthesis of AMP from IMP. In Zea mays (Maize), this protein is Adenylosuccinate synthetase, chloroplastic.